A 528-amino-acid chain; its full sequence is Transcription factor cghF (528 aa).

Residues 232-283 (TPPNHATSSTPTSTRTPPTYHPHGPRPKSPLSSTPSPRTESTKSAAPSRDLA) form a disordered region. The segment covering 238 to 249 (TSSTPTSTRTPP) has biased composition (low complexity). Positions 261-276 (PLSSTPSPRTESTKSA) are enriched in polar residues.

It is found in the nucleus. In terms of biological role, transcription factor that regulates the expression of the gene cluster that mediates the biosynthesis of the tetramic acid Sch210972, a potential anti-HIV fungal natural product that contains a decalin core. In Chaetomium globosum (strain ATCC 6205 / CBS 148.51 / DSM 1962 / NBRC 6347 / NRRL 1970) (Soil fungus), this protein is Transcription factor cghF.